The primary structure comprises 847 residues: Guanine nucleotide exchange factor VAV3 (847 aa).

A Calponin-homology (CH) domain is found at 1-119; it reads MEPWKQCAQW…ETLSRLSRTP (119 aa). Tyrosine 141 carries the phosphotyrosine modification. A DH domain is found at 192–371; that stretch reads IRSCCLAEIK…KDLAQYVNEV (180 aa). Residues 400–502 enclose the PH domain; the sequence is RPQGDGEIRI…WLEQFEMALS (103 aa). The Phorbol-ester/DAG-type zinc-finger motif lies at 513-562; the sequence is FHDFKMHTFTRVTSCKVCQMLLRGTFYQGYLCFKCGARAHKECLGRVDNC. Residues 560–847 are sufficient for interaction with ROS1; sequence DNCGRVNSGE…FPSTYVEEDE (288 aa). One can recognise an SH3 1 domain in the interval 592-660; that stretch reads PGLPKMQVIR…PSDAVKPCPC (69 aa). In terms of domain architecture, SH2 spans 672-766; it reads WYAGAMERLQ…TLDTTLQFPY (95 aa). An SH3 2 domain is found at 788-847; sequence KVLGIAIARYDFCARDMRELSLLKGDVVKIYTKMSANGWWRGEVNGRVGWFPSTYVEEDE.

Interacts with the PH domain of SH2B2. Interacts (via SH2 domains) with the phosphorylated form of EPHA2. Interacts with ROS1; constitutive interaction that mediates VAV3 phosphorylation. Post-translationally, phosphorylated. Phosphorylation can be mediated by ROS1. In osteoclasts, undergoes tyrosine phosphorylation in response to CSF1. As to expression, isoform 1 and isoform 3 are widely expressed; both are expressed at very low levels in skeletal muscle. In keratinocytes, isoform 1 is less abundant than isoform 3. Isoform 3 is detected at very low levels, if any, in adrenal gland, bone marrow, spleen, fetal brain and spinal cord; in these tissues, isoform 1 is readily detectable.

Its function is as follows. Exchange factor for GTP-binding proteins RhoA, RhoG and, to a lesser extent, Rac1. Binds physically to the nucleotide-free states of those GTPases. Plays an important role in angiogenesis. Its recruitment by phosphorylated EPHA2 is critical for EFNA1-induced RAC1 GTPase activation and vascular endothelial cell migration and assembly. May be important for integrin-mediated signaling, at least in some cell types. In osteoclasts, along with SYK tyrosine kinase, required for signaling through integrin alpha-v/beta-1 (ITAGV-ITGB1), a crucial event for osteoclast proper cytoskeleton organization and function. This signaling pathway involves RAC1, but not RHO, activation. Necessary for proper wound healing. In the course of wound healing, required for the phagocytotic cup formation preceding macrophage phagocytosis of apoptotic neutrophils. Responsible for integrin beta-2 (ITGB2)-mediated macrophage adhesion and, to a lesser extent, contributes to beta-3 (ITGB3)-mediated adhesion. Does not affect integrin beta-1 (ITGB1)-mediated adhesion. The chain is Guanine nucleotide exchange factor VAV3 (VAV3) from Homo sapiens (Human).